A 217-amino-acid polypeptide reads, in one-letter code: Cytidylate kinase (217 aa).

10–18 serves as a coordination point for ATP; that stretch reads GPAGAGKST.

It belongs to the cytidylate kinase family. Type 1 subfamily.

Its subcellular location is the cytoplasm. It catalyses the reaction CMP + ATP = CDP + ADP. The enzyme catalyses dCMP + ATP = dCDP + ADP. The protein is Cytidylate kinase of Alkaliphilus oremlandii (strain OhILAs) (Clostridium oremlandii (strain OhILAs)).